The chain runs to 259 residues: Ribosomal RNA large subunit methyltransferase E (259 aa).

Residues Gly-58, Trp-60, Asp-78, Asp-96, and Asp-120 each coordinate S-adenosyl-L-methionine. Residue Lys-160 is the Proton acceptor of the active site.

It belongs to the class I-like SAM-binding methyltransferase superfamily. RNA methyltransferase RlmE family.

It is found in the cytoplasm. It catalyses the reaction uridine(2552) in 23S rRNA + S-adenosyl-L-methionine = 2'-O-methyluridine(2552) in 23S rRNA + S-adenosyl-L-homocysteine + H(+). Specifically methylates the uridine in position 2552 of 23S rRNA at the 2'-O position of the ribose in the fully assembled 50S ribosomal subunit. This is Ribosomal RNA large subunit methyltransferase E from Methanococcus vannielii (strain ATCC 35089 / DSM 1224 / JCM 13029 / OCM 148 / SB).